A 603-amino-acid chain; its full sequence is Elongation factor 4 (603 aa).

Positions 7–189 (VRIRNFCIIA…AVVERIPPPP (183 aa)) constitute a tr-type G domain. GTP-binding positions include 19–24 (DHGKST) and 136–139 (NKID).

It belongs to the TRAFAC class translation factor GTPase superfamily. Classic translation factor GTPase family. LepA subfamily.

The protein localises to the cell inner membrane. It carries out the reaction GTP + H2O = GDP + phosphate + H(+). Required for accurate and efficient protein synthesis under certain stress conditions. May act as a fidelity factor of the translation reaction, by catalyzing a one-codon backward translocation of tRNAs on improperly translocated ribosomes. Back-translocation proceeds from a post-translocation (POST) complex to a pre-translocation (PRE) complex, thus giving elongation factor G a second chance to translocate the tRNAs correctly. Binds to ribosomes in a GTP-dependent manner. The sequence is that of Elongation factor 4 from Trichormus variabilis (strain ATCC 29413 / PCC 7937) (Anabaena variabilis).